Consider the following 265-residue polypeptide: 5'-nucleotidase SurE (265 aa).

Residues D8, D9, S40, and N98 each contribute to the a divalent metal cation site.

This sequence belongs to the SurE nucleotidase family. It depends on a divalent metal cation as a cofactor.

The protein localises to the cytoplasm. It catalyses the reaction a ribonucleoside 5'-phosphate + H2O = a ribonucleoside + phosphate. Functionally, nucleotidase that shows phosphatase activity on nucleoside 5'-monophosphates. The polypeptide is 5'-nucleotidase SurE (Thermosynechococcus vestitus (strain NIES-2133 / IAM M-273 / BP-1)).